The following is a 158-amino-acid chain: Cyclic pyranopterin monophosphate synthase (158 aa).

Substrate is bound by residues 75–77 and 113–114; these read LCH and ME. The active site involves aspartate 128.

Belongs to the MoaC family. Homohexamer; trimer of dimers.

The catalysed reaction is (8S)-3',8-cyclo-7,8-dihydroguanosine 5'-triphosphate = cyclic pyranopterin phosphate + diphosphate. Its pathway is cofactor biosynthesis; molybdopterin biosynthesis. Its function is as follows. Catalyzes the conversion of (8S)-3',8-cyclo-7,8-dihydroguanosine 5'-triphosphate to cyclic pyranopterin monophosphate (cPMP). The polypeptide is Cyclic pyranopterin monophosphate synthase (Polynucleobacter asymbioticus (strain DSM 18221 / CIP 109841 / QLW-P1DMWA-1) (Polynucleobacter necessarius subsp. asymbioticus)).